Consider the following 361-residue polypeptide: Aminomethyltransferase (361 aa).

This sequence belongs to the GcvT family. In terms of assembly, the glycine cleavage system is composed of four proteins: P, T, L and H.

It carries out the reaction N(6)-[(R)-S(8)-aminomethyldihydrolipoyl]-L-lysyl-[protein] + (6S)-5,6,7,8-tetrahydrofolate = N(6)-[(R)-dihydrolipoyl]-L-lysyl-[protein] + (6R)-5,10-methylene-5,6,7,8-tetrahydrofolate + NH4(+). Functionally, the glycine cleavage system catalyzes the degradation of glycine. This chain is Aminomethyltransferase, found in Herpetosiphon aurantiacus (strain ATCC 23779 / DSM 785 / 114-95).